The sequence spans 132 residues: Small ribosomal subunit protein uS8c (132 aa).

The protein belongs to the universal ribosomal protein uS8 family. Part of the 30S ribosomal subunit.

It localises to the plastid. The protein localises to the chloroplast. Functionally, one of the primary rRNA binding proteins, it binds directly to 16S rRNA central domain where it helps coordinate assembly of the platform of the 30S subunit. The chain is Small ribosomal subunit protein uS8c (rps8) from Psilotum nudum (Whisk fern).